The primary structure comprises 360 residues: Chorismate synthase (360 aa).

R47 serves as a coordination point for NADP(+). FMN contacts are provided by residues 124–126 (RAS), G286, 301–305 (KPTAT), and R327.

It belongs to the chorismate synthase family. Homotetramer. The cofactor is FMNH2.

It catalyses the reaction 5-O-(1-carboxyvinyl)-3-phosphoshikimate = chorismate + phosphate. It participates in metabolic intermediate biosynthesis; chorismate biosynthesis; chorismate from D-erythrose 4-phosphate and phosphoenolpyruvate: step 7/7. In terms of biological role, catalyzes the anti-1,4-elimination of the C-3 phosphate and the C-6 proR hydrogen from 5-enolpyruvylshikimate-3-phosphate (EPSP) to yield chorismate, which is the branch point compound that serves as the starting substrate for the three terminal pathways of aromatic amino acid biosynthesis. This reaction introduces a second double bond into the aromatic ring system. The chain is Chorismate synthase from Synechococcus sp. (strain RCC307).